The chain runs to 212 residues: Transcription antitermination protein NusB (212 aa).

The protein belongs to the NusB family.

Its function is as follows. Involved in transcription antitermination. Required for transcription of ribosomal RNA (rRNA) genes. Binds specifically to the boxA antiterminator sequence of the ribosomal RNA (rrn) operons. In Gloeothece citriformis (strain PCC 7424) (Cyanothece sp. (strain PCC 7424)), this protein is Transcription antitermination protein NusB.